A 693-amino-acid polypeptide reads, in one-letter code: Elongation factor G (693 aa).

In terms of domain architecture, tr-type G spans 8 to 282 (EKTRNIGIMA…AVIDYLPSPL (275 aa)). Residues 17–24 (AHVDAGKT), 81–85 (DTPGH), and 135–138 (NKMD) contribute to the GTP site.

Belongs to the TRAFAC class translation factor GTPase superfamily. Classic translation factor GTPase family. EF-G/EF-2 subfamily.

The protein resides in the cytoplasm. In terms of biological role, catalyzes the GTP-dependent ribosomal translocation step during translation elongation. During this step, the ribosome changes from the pre-translocational (PRE) to the post-translocational (POST) state as the newly formed A-site-bound peptidyl-tRNA and P-site-bound deacylated tRNA move to the P and E sites, respectively. Catalyzes the coordinated movement of the two tRNA molecules, the mRNA and conformational changes in the ribosome. This chain is Elongation factor G, found in Streptococcus pneumoniae (strain ATCC 700669 / Spain 23F-1).